The primary structure comprises 335 residues: Expansin-like protein 3 (335 aa).

Positions Met-1 to Ala-20 are cleaved as a signal peptide. Residues Gln-21 to Asn-314 are Extracellular-facing. Positions Ala-43–Asn-143 constitute an Expansin-like EG45 domain. 2 cysteine pairs are disulfide-bonded: Cys-46-Cys-76 and Cys-79-Cys-138. N-linked (GlcNAc...) asparagine glycosylation is present at Asn-87. Residues Tyr-247–Ser-276 are disordered. Positions Pro-249–Pro-272 are enriched in low complexity. Residues Ser-315 to Phe-335 traverse the membrane as a helical segment.

This sequence belongs to the expansin family. Expansin A subfamily.

It localises to the membrane. Its function is as follows. May serve to lubricate the movement of the cellulose microfibrils during cell growth and wall extension and/or may serve to maintain the fluid state of the slug cell wall. This Dictyostelium discoideum (Social amoeba) protein is Expansin-like protein 3 (expl3).